Consider the following 602-residue polypeptide: Threonine--tRNA ligase (602 aa).

The segment at 208 to 499 is catalytic; sequence DHRKLGTELK…LTEHCAGEFP (292 aa). Cys300, His351, and His476 together coordinate Zn(2+).

It belongs to the class-II aminoacyl-tRNA synthetase family. Homodimer. It depends on Zn(2+) as a cofactor.

The protein resides in the cytoplasm. The enzyme catalyses tRNA(Thr) + L-threonine + ATP = L-threonyl-tRNA(Thr) + AMP + diphosphate + H(+). Its function is as follows. Catalyzes the attachment of threonine to tRNA(Thr) in a two-step reaction: L-threonine is first activated by ATP to form Thr-AMP and then transferred to the acceptor end of tRNA(Thr). Also edits incorrectly charged L-seryl-tRNA(Thr). The polypeptide is Threonine--tRNA ligase (Campylobacter jejuni subsp. jejuni serotype O:2 (strain ATCC 700819 / NCTC 11168)).